Reading from the N-terminus, the 254-residue chain is Wall-associated protein (254 aa).

Positions 25-46 are disordered; that stretch reads DRVEPKEEPPKVPQAPKRDLKP.

The protein localises to the secreted. Its subcellular location is the cell wall. The protein is Wall-associated protein (wapA') of Geobacillus stearothermophilus (Bacillus stearothermophilus).